Here is a 155-residue protein sequence, read N- to C-terminus: SsrA-binding protein (155 aa).

Belongs to the SmpB family.

It localises to the cytoplasm. Functionally, required for rescue of stalled ribosomes mediated by trans-translation. Binds to transfer-messenger RNA (tmRNA), required for stable association of tmRNA with ribosomes. tmRNA and SmpB together mimic tRNA shape, replacing the anticodon stem-loop with SmpB. tmRNA is encoded by the ssrA gene; the 2 termini fold to resemble tRNA(Ala) and it encodes a 'tag peptide', a short internal open reading frame. During trans-translation Ala-aminoacylated tmRNA acts like a tRNA, entering the A-site of stalled ribosomes, displacing the stalled mRNA. The ribosome then switches to translate the ORF on the tmRNA; the nascent peptide is terminated with the 'tag peptide' encoded by the tmRNA and targeted for degradation. The ribosome is freed to recommence translation, which seems to be the essential function of trans-translation. In Bacillus cereus (strain B4264), this protein is SsrA-binding protein.